Here is a 433-residue protein sequence, read N- to C-terminus: Phosphomethylpyrimidine synthase (433 aa).

Substrate contacts are provided by residues Asn69, Met98, Tyr127, His163, 185-187 (SRG), 226-229 (DACR), and Glu265. His269 is a Zn(2+) binding site. Tyr292 contacts substrate. Position 333 (His333) interacts with Zn(2+). Residues Cys409, Cys412, and Cys416 each contribute to the [4Fe-4S] cluster site.

The protein belongs to the ThiC family. The cofactor is [4Fe-4S] cluster.

It catalyses the reaction 5-amino-1-(5-phospho-beta-D-ribosyl)imidazole + S-adenosyl-L-methionine = 4-amino-2-methyl-5-(phosphooxymethyl)pyrimidine + CO + 5'-deoxyadenosine + formate + L-methionine + 3 H(+). Its pathway is cofactor biosynthesis; thiamine diphosphate biosynthesis. Catalyzes the synthesis of the hydroxymethylpyrimidine phosphate (HMP-P) moiety of thiamine from aminoimidazole ribotide (AIR) in a radical S-adenosyl-L-methionine (SAM)-dependent reaction. This chain is Phosphomethylpyrimidine synthase, found in Clostridioides difficile (strain 630) (Peptoclostridium difficile).